A 229-amino-acid polypeptide reads, in one-letter code: Cytochrome b translational activator protein CBS1, mitochondrial (229 aa).

The N-terminal 25 residues, 1 to 25 (MLRTKVFATTVARISGIRRYIPIRT), are a transit peptide targeting the mitochondrion.

It is found in the mitochondrion inner membrane. MRNA-specific translational activator of cytochrome b. The cytochrome b (COB) leader RNA may represent the target sequence for CBS1 and CBS2, tethering the COB mRNA to the inner mitochondrial membrane, where cotranslational insertion of cytochrome b into the membrane can occur. The sequence is that of Cytochrome b translational activator protein CBS1, mitochondrial (CBS1) from Saccharomyces cerevisiae (strain ATCC 204508 / S288c) (Baker's yeast).